Consider the following 135-residue polypeptide: UPF0299 membrane protein YE2790 (135 aa).

Helical transmembrane passes span 4 to 24 (VTSLGWQYLRAFVIIYLCLWA), 30 to 50 (LLLPISIPGSILGMLILFALL), 63 to 83 (GCHLLIRYMALLFVPIGVGVM), and 93 to 113 (FGPIVVSCFVSTLVVMLVVGY).

The protein belongs to the UPF0299 family.

It localises to the cell inner membrane. The sequence is that of UPF0299 membrane protein YE2790 from Yersinia enterocolitica serotype O:8 / biotype 1B (strain NCTC 13174 / 8081).